Consider the following 217-residue polypeptide: Somatotropin (217 aa).

Positions 1–26 (MATGSRTSLLLAFGLLCLPWLQEGSA) are cleaved as a signal peptide. A Zn(2+)-binding site is contributed by His-44. An intrachain disulfide couples Cys-79 to Cys-191. Residue Ser-132 is modified to Phosphoserine. Position 163 is a deamidated glutamine; by deterioration (Gln-163). Ser-176 carries the post-translational modification Phosphoserine. Residue Asn-178 is modified to Deamidated asparagine; by deterioration. A Zn(2+)-binding site is contributed by Glu-200. An intrachain disulfide couples Cys-208 to Cys-215.

The protein belongs to the somatotropin/prolactin family. Monomer, dimer, trimer, tetramer and pentamer, disulfide-linked or non-covalently associated, in homomeric and heteromeric combinations. Can also form a complex either with GHBP or with the alpha2-macroglobulin complex.

Its subcellular location is the secreted. Plays an important role in growth control. Its major role in stimulating body growth is to stimulate the liver and other tissues to secrete IGF1. It stimulates both the differentiation and proliferation of myoblasts. It also stimulates amino acid uptake and protein synthesis in muscle and other tissues. This Homo sapiens (Human) protein is Somatotropin (GH1).